The following is a 139-amino-acid chain: Putative pre-16S rRNA nuclease (139 aa).

Belongs to the YqgF nuclease family.

The protein resides in the cytoplasm. Could be a nuclease involved in processing of the 5'-end of pre-16S rRNA. The sequence is that of Putative pre-16S rRNA nuclease from Phocaeicola vulgatus (strain ATCC 8482 / DSM 1447 / JCM 5826 / CCUG 4940 / NBRC 14291 / NCTC 11154) (Bacteroides vulgatus).